The primary structure comprises 182 residues: Large ribosomal subunit protein uL5 (182 aa).

Belongs to the universal ribosomal protein uL5 family. In terms of assembly, part of the 50S ribosomal subunit; part of the 5S rRNA/L5/L18/L25 subcomplex. Contacts the 5S rRNA and the P site tRNA. Forms a bridge to the 30S subunit in the 70S ribosome.

In terms of biological role, this is one of the proteins that bind and probably mediate the attachment of the 5S RNA into the large ribosomal subunit, where it forms part of the central protuberance. In the 70S ribosome it contacts protein S13 of the 30S subunit (bridge B1b), connecting the 2 subunits; this bridge is implicated in subunit movement. Contacts the P site tRNA; the 5S rRNA and some of its associated proteins might help stabilize positioning of ribosome-bound tRNAs. The chain is Large ribosomal subunit protein uL5 from Nostoc punctiforme (strain ATCC 29133 / PCC 73102).